The chain runs to 852 residues: Replication factor C small subunit (852 aa).

The 124-residue stretch at 183 to 306 (WLGYFMGSGY…IAYALASFGI (124 aa)) folds into the DOD-type homing endonuclease domain.

Belongs to the activator 1 small subunits family. RfcS subfamily. Heteromultimer composed of three to four small subunits (RfcS) and one to two large subunits (RfcL). In terms of processing, this protein undergoes a protein self splicing that involves a post-translational excision of the intervening region (intein) followed by peptide ligation.

In terms of biological role, part of the RFC clamp loader complex which loads the PCNA sliding clamp onto DNA. The complex possesses DNA-dependent ATPase activity which is further stimulated by PCNA. This Pyrococcus furiosus (strain ATCC 43587 / DSM 3638 / JCM 8422 / Vc1) protein is Replication factor C small subunit (rfcS).